The chain runs to 97 residues: SAGA-associated factor 11 (97 aa).

An SGF11-type zinc finger spans residues 70–91; that stretch reads IECNVCGREVSGNRFAAHLVRC.

It belongs to the SGF11 family. In terms of assembly, component of the 1.8 MDa SAGA transcription coactivator-HAT complex. SAGA is built of 5 distinct domains with specialized functions. Within the SAGA complex, SUS1, SGF11, SGF73 and UBP8 form an additional subcomplex of SAGA called the DUB module (deubiquitination module). Interacts directly with SGF73, SUS1 and UBP8.

Its subcellular location is the nucleus. Functionally, functions as a component of the transcription regulatory histone acetylation (HAT) complex SAGA. At the promoters, SAGA is required for recruitment of the basal transcription machinery. It influences RNA polymerase II transcriptional activity through different activities such as TBP interaction and promoter selectivity, interaction with transcription activators, and chromatin modification through histone acetylation and deubiquitination. SAGA acetylates nucleosomal histone H3 to some extent (to form H3K9ac, H3K14ac, H3K18ac and H3K23ac). SAGA interacts with DNA via upstream activating sequences (UASs). Involved in transcriptional regulation of a subset of SAGA-regulated genes. Within the SAGA complex, participates in a subcomplex, that specifically deubiquitinates histones H2B. The chain is SAGA-associated factor 11 from Kluyveromyces lactis (strain ATCC 8585 / CBS 2359 / DSM 70799 / NBRC 1267 / NRRL Y-1140 / WM37) (Yeast).